Here is a 431-residue protein sequence, read N- to C-terminus: Ubiquitin-like modifier-activating enzyme 5 (431 aa).

The ATP site is built by Gly-92, Asp-113, Lys-136, Asn-159, and Asn-197. Residues Cys-239 and Cys-242 each contribute to the Zn(2+) site. The active-site Glycyl thioester intermediate is Cys-263. Cys-316 and Cys-321 together coordinate Zn(2+). A disordered region spans residues 339–396 (AKAKMEADASTTIDEGPLHDDNEWNISVVDDENEKDTTKAASSSDTLPEGLTRELPVA).

Belongs to the ubiquitin-activating E1 family. UBA5 subfamily.

Functionally, E1-like enzyme which activates UFM1. The sequence is that of Ubiquitin-like modifier-activating enzyme 5 from Arabidopsis thaliana (Mouse-ear cress).